Reading from the N-terminus, the 127-residue chain is Small ribosomal subunit protein bS6 (127 aa).

It belongs to the bacterial ribosomal protein bS6 family.

Its function is as follows. Binds together with bS18 to 16S ribosomal RNA. This Acinetobacter baumannii (strain AB0057) protein is Small ribosomal subunit protein bS6.